Reading from the N-terminus, the 302-residue chain is DDRGK domain-containing protein 1 (302 aa).

A helical membrane pass occupies residues 1–21 (MDPLLLGSVGVLVLAVTLIIW). The Cytoplasmic portion of the chain corresponds to 22-302 (RLLKLQWDEK…IRLETPSAAE (281 aa)). Positions 101 to 178 (EYDEDGKKIG…EREEKERKEH (78 aa)) are disordered. The segment covering 118–178 (QAKEEKRQMR…EREEKERKEH (61 aa)) has biased composition (basic and acidic residues).

It belongs to the DDRGK1 family.

It is found in the endoplasmic reticulum membrane. Its function is as follows. Substrate adapter for ufmylation, the covalent attachment of the ubiquitin-like modifier ufm-1 to substrate proteins. The polypeptide is DDRGK domain-containing protein 1 (Caenorhabditis elegans).